The sequence spans 296 residues: Ribosomal protein L11 methyltransferase (296 aa).

Residues Thr145, Gly166, Asp188, and Asn230 each contribute to the S-adenosyl-L-methionine site.

It belongs to the methyltransferase superfamily. PrmA family.

The protein resides in the cytoplasm. The catalysed reaction is L-lysyl-[protein] + 3 S-adenosyl-L-methionine = N(6),N(6),N(6)-trimethyl-L-lysyl-[protein] + 3 S-adenosyl-L-homocysteine + 3 H(+). Methylates ribosomal protein L11. The chain is Ribosomal protein L11 methyltransferase from Histophilus somni (strain 129Pt) (Haemophilus somnus).